We begin with the raw amino-acid sequence, 235 residues long: Urease accessory protein UreF (235 aa).

The protein belongs to the UreF family. UreD, UreF and UreG form a complex that acts as a GTP-hydrolysis-dependent molecular chaperone, activating the urease apoprotein by helping to assemble the nickel containing metallocenter of UreC. The UreE protein probably delivers the nickel.

The protein resides in the cytoplasm. Its function is as follows. Required for maturation of urease via the functional incorporation of the urease nickel metallocenter. The sequence is that of Urease accessory protein UreF from Haemophilus influenzae (strain PittGG).